Consider the following 183-residue polypeptide: UPF0302 protein BH1670 (183 aa).

Belongs to the UPF0302 family.

In Halalkalibacterium halodurans (strain ATCC BAA-125 / DSM 18197 / FERM 7344 / JCM 9153 / C-125) (Bacillus halodurans), this protein is UPF0302 protein BH1670.